The primary structure comprises 299 residues: MSDSNLTNPIKAFFHDEFPEQYQEPPGLQKNMKPVPDCGEKSYKGSGKLTGRKALVTGGDSGIGRAAAIAYAREGADVAINYLPEEQPDAEEVKELIEAEGRKAVLIPGDLSDESFCQDLVKQSHHELGGLDVLALVAGKQQAVENIEDLPTEQIYKTFEVNVFSLYWVVKAALPYLPEGASIITTTSVEGYNPSPMLLDYAATKNAIIGFTVGLGKQLASKGIRVNSVAPGPIWTPLQISGGQPTENIPKFGQGTPPAPLNRAGQPVELADVYVFLASENSSYVTSQVYGITGGIPTA.

The interval 1 to 44 is disordered; sequence MSDSNLTNPIKAFFHDEFPEQYQEPPGLQKNMKPVPDCGEKSYK. 55-79 lines the NADP(+) pocket; that stretch reads LVTGGDSGIGRAAAIAYAREGADVA. Ser-188 serves as a coordination point for substrate. The active-site Proton acceptor is the Tyr-201.

It belongs to the short-chain dehydrogenases/reductases (SDR) family.

This is an uncharacterized protein from Bacillus subtilis (strain 168).